Consider the following 296-residue polypeptide: GTPase Era (296 aa).

In terms of domain architecture, Era-type G spans 3-170 (KSGFITIVGR…LELMVKYLPE (168 aa)). The G1 stretch occupies residues 11–18 (GRPNVGKS). 11–18 (GRPNVGKS) contacts GTP. Positions 37 to 41 (QTTRN) are G2. Residues 58–61 (DTPG) are G3. Residues 58-62 (DTPGI) and 120-123 (NKVD) each bind GTP. Residues 120 to 123 (NKVD) are G4. The tract at residues 149-151 (ISA) is G5. Residues 201–278 (LSQEVPHGIA…NIKIWVKVRK (78 aa)) enclose the KH type-2 domain.

This sequence belongs to the TRAFAC class TrmE-Era-EngA-EngB-Septin-like GTPase superfamily. Era GTPase family. In terms of assembly, monomer.

It localises to the cytoplasm. It is found in the cell membrane. An essential GTPase that binds both GDP and GTP, with rapid nucleotide exchange. Plays a role in 16S rRNA processing and 30S ribosomal subunit biogenesis and possibly also in cell cycle regulation and energy metabolism. This chain is GTPase Era, found in Clostridium perfringens (strain 13 / Type A).